Here is a 279-residue protein sequence, read N- to C-terminus: MVRMFLQLVGCLMHRKMQPKLVLTPLHYITKNQRQWVAKPLEQDVITAFKARCQQYGFKSEAILPHDSYLINLGNPETEKLEKSRAAFIDEMQRCNQLGLTLLNFHPGSHLKKINESDCLRLIAESINMAHQEVPEVVAVIENTAGQGSNVGWRFEHLAEIIDQIEDKSRVGVCIDTCHTFAAGYDLRSEAATEVTFSEFDQVVGMSFLRGMHLNDSKGKLGSHLDRHHSLGEGEIGWDCFRYLMQASGFDNIPLVLETINPDIWQQEIMMLRSFVASE.

Zn(2+) is bound by residues His66, His106, Glu142, Asp176, His179, His213, Asp226, His228, and Glu258.

The protein belongs to the AP endonuclease 2 family. It depends on Zn(2+) as a cofactor.

The enzyme catalyses Endonucleolytic cleavage to 5'-phosphooligonucleotide end-products.. In terms of biological role, endonuclease IV plays a role in DNA repair. It cleaves phosphodiester bonds at apurinic or apyrimidinic (AP) sites, generating a 3'-hydroxyl group and a 5'-terminal sugar phosphate. The sequence is that of Probable endonuclease 4 from Photobacterium profundum (strain SS9).